Reading from the N-terminus, the 435-residue chain is uncharacterized protein (435 aa).

9 helical membrane passes run L40–F60, V103–L123, I133–P153, L195–L215, I226–G246, V313–V333, L358–W378, W381–P401, and V414–G434.

Its subcellular location is the cell membrane. This is an uncharacterized protein from Mycobacterium bovis (strain ATCC BAA-935 / AF2122/97).